A 171-amino-acid chain; its full sequence is NADH-quinone oxidoreductase subunit B 1 (171 aa).

Residues cysteine 44, cysteine 45, cysteine 110, and cysteine 139 each coordinate [4Fe-4S] cluster.

This sequence belongs to the complex I 20 kDa subunit family. NDH-1 is composed of 14 different subunits. Subunits NuoB, C, D, E, F, and G constitute the peripheral sector of the complex. The cofactor is [4Fe-4S] cluster.

It localises to the cell inner membrane. It catalyses the reaction a quinone + NADH + 5 H(+)(in) = a quinol + NAD(+) + 4 H(+)(out). Its function is as follows. NDH-1 shuttles electrons from NADH, via FMN and iron-sulfur (Fe-S) centers, to quinones in the respiratory chain. The immediate electron acceptor for the enzyme in this species is believed to be ubiquinone. Couples the redox reaction to proton translocation (for every two electrons transferred, four hydrogen ions are translocated across the cytoplasmic membrane), and thus conserves the redox energy in a proton gradient. The polypeptide is NADH-quinone oxidoreductase subunit B 1 (Opitutus terrae (strain DSM 11246 / JCM 15787 / PB90-1)).